Consider the following 641-residue polypeptide: YAP1-binding protein 2 (641 aa).

Belongs to the YBP1 family.

It localises to the cytoplasm. Involved in oxidative stress response and redox homeostasis. Required for hydrogen peroxide-induced activation of YAP1. Acts in a parallele pathway to YBP1. This is YAP1-binding protein 2 from Saccharomyces cerevisiae (strain ATCC 204508 / S288c) (Baker's yeast).